The sequence spans 82 residues: Large ribosomal subunit protein bL27 (82 aa).

Residues 1–20 (MATKKAGGSSSNGRDSIGKR) form a disordered region.

This sequence belongs to the bacterial ribosomal protein bL27 family.

The sequence is that of Large ribosomal subunit protein bL27 from Neorickettsia sennetsu (strain ATCC VR-367 / Miyayama) (Ehrlichia sennetsu).